The chain runs to 20 residues: Beta-1,3-glucan-binding protein 2 (20 aa).

The protein belongs to the insect beta-1,3-glucan binding protein family. In terms of assembly, monomer.

It localises to the secreted. Functionally, involved in the recognition of invading microorganisms causing their aggregation. Activates the phenoloxidase cascade. Binds specifically to beta-1,3-glucan. Binds the A.niger cell wall component alpha-1,3-glucan, a fungal pathogen-associated molecular pattern (PAMP) that activates the host immune response. In Galleria mellonella (Greater wax moth), this protein is Beta-1,3-glucan-binding protein 2.